A 135-amino-acid chain; its full sequence is Mini-ribonuclease 3 (135 aa).

The active site involves aspartate 19.

It belongs to the MrnC RNase family. In terms of assembly, homodimer. Requires Mg(2+) as cofactor.

Its subcellular location is the cytoplasm. Its function is as follows. Involved in correct processing of both the 5' and 3' ends of 23S rRNA precursor. Processes 30S rRNA precursor transcript even in absence of ribonuclease 3 (Rnc); Rnc processes 30S rRNA into smaller rRNA precursors. This chain is Mini-ribonuclease 3, found in Gloeobacter violaceus (strain ATCC 29082 / PCC 7421).